We begin with the raw amino-acid sequence, 299 residues long: RGG repeats nuclear RNA binding protein A (299 aa).

Residues 1-21 (RGGGRGGPRGGGRGRGPGRGR) are compositionally biased toward gly residues. Disordered regions lie at residues 1–173 (RGGG…KEMT) and 232–299 (EAVE…LVAK). The span at 45–60 (RVQEDGESGKLSERRG) shows a compositional bias: basic and acidic residues. Gly residues predominate over residues 61–78 (GYGGPRGGFHGGRRGGFN). Basic and acidic residues-rich tracts occupy residues 86–98 (EGER…DRRS) and 134–146 (DGEK…KEAG). The Arginine-rich RNA-binding motif E-R-P-R-R-X-[F/Y]-[E/D]-R-R-S motif lies at 88–98 (ERPRRVFDRRS). A compositionally biased stretch (gly residues) spans 267–278 (RGRGGFGGGVGG).

It belongs to the SERBP1-HABP4 family. In terms of tissue distribution, expressed in seedlings but not in roots.

Its subcellular location is the nucleus. The protein localises to the cytoplasm. It is found in the perinuclear region. In terms of biological role, ribosome-binding protein that acts as a regulator of mRNA translation by promoting ribosome inactivation. Binds RNA. This is RGG repeats nuclear RNA binding protein A from Nicotiana tabacum (Common tobacco).